The chain runs to 277 residues: Large ribosomal subunit protein uL2m (277 aa).

Residues 225–263 (AMNPVDHPHGGGEGKTSGGRPSVTPWSWPTKGQPTRSKR) form a disordered region. The span at 248 to 259 (TPWSWPTKGQPT) shows a compositional bias: polar residues.

This sequence belongs to the universal ribosomal protein uL2 family.

It is found in the mitochondrion. This is Large ribosomal subunit protein uL2m (RPL2) from Reclinomonas americana.